Consider the following 98-residue polypeptide: U11-barytoxin-Tl1b (98 aa).

The first 21 residues, M1–A21, serve as a signal peptide directing secretion. Positions S22–R50 are excised as a propeptide. 3 cysteine pairs are disulfide-bonded: C57–C71, C64–C76, and C70–C89.

Belongs to the neurotoxin 10 (Hwtx-1) family. 25 (ICK4) subfamily. As to expression, expressed by the venom gland.

Its subcellular location is the secreted. Functionally, ion channel inhibitor. This Trittame loki (Brush-footed trapdoor spider) protein is U11-barytoxin-Tl1b.